We begin with the raw amino-acid sequence, 144 residues long: Hexon-interlacing protein (144 aa).

The stretch at 106-133 (LTVMLAKLETLTAQLEELSQKVEELADA) forms a coiled coil.

It belongs to the adenoviridae hexon-interlacing protein family. In terms of assembly, homotrimer. Interacts with hexon protein; this interaction tethers the hexons together. Self-interacts with adjacent proteins. Interacts with kinesin light chain KLC1; this interaction leads to capsid disruption at the nuclear pore complex during virus entry into host cell.

The protein localises to the virion. The protein resides in the host nucleus. Functionally, structural component of the virion that acts as a cement protein on the capsid exterior and forms triskelion structures consisting of three molecules that stabilize three hexon trimers at the center of each icosahedral facet and fixes the peripentonal hexons. Dispensable for assembly. During virus entry, recruits the anterograde motor kinesin-1 to the capsid docked at the nuclear pore complex thereby subjecting the docked capsid to a pulling force. The resulting tension leads to capsid disruption, dispersion of capsid fragments toward cell periphery and eventually viral DNA entry into the host nucleus. This chain is Hexon-interlacing protein, found in Homo sapiens (Human).